The primary structure comprises 387 residues: Signal-regulatory protein gamma (387 aa).

Residues 1–28 (MPVPASWPHPPGPFLLLTLLLGLTEVAG) form the signal peptide. The Ig-like V-type domain maps to 29 to 137 (EEELQMIQPE…ENVEFKSGPG (109 aa)). Topologically, residues 29-360 (EEELQMIQPE…QKDQSSDATP (332 aa)) are extracellular. 2 cysteine pairs are disulfide-bonded: Cys53–Cys119 and Cys168–Cys226. Ig-like C1-type domains are found at residues 146-245 (PSAP…ANLS) and 252-340 (PTLE…LAVS). N-linked (GlcNAc...) asparagine glycans are attached at residues Asn243, Asn268, Asn309, and Asn317. An intrachain disulfide couples Cys271 to Cys329. The chain crosses the membrane as a helical span at residues 361–383 (GPASSLTALLLIAVLLGPIYVPW). Residues 384–387 (KQKT) are Cytoplasmic-facing.

As to quaternary structure, interacts with CD47. As to expression, detected in liver, and at very low levels in brain, heart, lung, pancreas, kidney, placenta and skeletal muscle. Expressed on CD4+ T-cells, CD8+ T-cells, CD56-bright natural killer (NK) cells, CD20+ cells, and all activated NK cells. Mainly present in the paracortical T-cell area of lymph nodes, with only sparse positive cells in the mantle and in the germinal center of B-cell follicles. In the thymus, primarily expressed in the medulla on mature T-lymphocytes that have undergone thymic selection.

It is found in the membrane. In terms of biological role, probable immunoglobulin-like cell surface receptor. On binding with CD47, mediates cell-cell adhesion. Engagement on T-cells by CD47 on antigen-presenting cells results in enhanced antigen-specific T-cell proliferation and costimulates T-cell activation. The chain is Signal-regulatory protein gamma (SIRPG) from Homo sapiens (Human).